Consider the following 339-residue polypeptide: Dihydroorotate dehydrogenase (quinone) (339 aa).

Residues 62 to 66 (AGMDK) and threonine 86 contribute to the FMN site. A substrate-binding site is contributed by lysine 66. 111-115 (NRMGF) lines the substrate pocket. 2 residues coordinate FMN: asparagine 139 and asparagine 172. Residue asparagine 172 coordinates substrate. Serine 175 acts as the Nucleophile in catalysis. Asparagine 177 provides a ligand contact to substrate. Lysine 217 and threonine 245 together coordinate FMN. 246 to 247 (NT) contacts substrate. Residues glycine 268, glycine 297, and 318 to 319 (YS) contribute to the FMN site.

The protein belongs to the dihydroorotate dehydrogenase family. Type 2 subfamily. In terms of assembly, monomer. It depends on FMN as a cofactor.

It is found in the cell membrane. It carries out the reaction (S)-dihydroorotate + a quinone = orotate + a quinol. The protein operates within pyrimidine metabolism; UMP biosynthesis via de novo pathway; orotate from (S)-dihydroorotate (quinone route): step 1/1. Its function is as follows. Catalyzes the conversion of dihydroorotate to orotate with quinone as electron acceptor. This is Dihydroorotate dehydrogenase (quinone) from Shewanella sp. (strain MR-4).